Consider the following 331-residue polypeptide: Ornithine carbamoyltransferase (331 aa).

Carbamoyl phosphate contacts are provided by residues 55–58 (STRT), Gln82, Arg106, and 133–136 (HPTQ). L-ornithine-binding positions include Asn166, Asp230, and 234–235 (SM). Carbamoyl phosphate contacts are provided by residues 272–273 (CL) and Arg317.

This sequence belongs to the aspartate/ornithine carbamoyltransferase superfamily. OTCase family.

Its subcellular location is the cytoplasm. It catalyses the reaction carbamoyl phosphate + L-ornithine = L-citrulline + phosphate + H(+). It functions in the pathway amino-acid biosynthesis; L-arginine biosynthesis; L-arginine from L-ornithine and carbamoyl phosphate: step 1/3. Functionally, reversibly catalyzes the transfer of the carbamoyl group from carbamoyl phosphate (CP) to the N(epsilon) atom of ornithine (ORN) to produce L-citrulline. The protein is Ornithine carbamoyltransferase (argF) of Neisseria meningitidis serogroup A / serotype 4A (strain DSM 15465 / Z2491).